Reading from the N-terminus, the 198-residue chain is GTP cyclohydrolase-2 (198 aa).

Arginine 52–glutamate 56 contributes to the GTP binding site. Zn(2+)-binding residues include cysteine 57, cysteine 68, and cysteine 70. GTP contacts are provided by residues glutamine 73, glutamate 94 to arginine 96, and threonine 116. Aspartate 128 functions as the Proton acceptor in the catalytic mechanism. Residue arginine 130 is the Nucleophile of the active site. GTP contacts are provided by threonine 151 and lysine 156.

The protein belongs to the GTP cyclohydrolase II family. Requires Zn(2+) as cofactor.

It catalyses the reaction GTP + 4 H2O = 2,5-diamino-6-hydroxy-4-(5-phosphoribosylamino)-pyrimidine + formate + 2 phosphate + 3 H(+). It functions in the pathway cofactor biosynthesis; riboflavin biosynthesis; 5-amino-6-(D-ribitylamino)uracil from GTP: step 1/4. Its function is as follows. Catalyzes the conversion of GTP to 2,5-diamino-6-ribosylamino-4(3H)-pyrimidinone 5'-phosphate (DARP), formate and pyrophosphate. This is GTP cyclohydrolase-2 from Vibrio vulnificus (strain CMCP6).